The sequence spans 472 residues: ATP-dependent protease ATPase subunit HslU (472 aa).

ATP contacts are provided by residues I20, 62 to 67 (GVGKTE), D285, E350, and R422.

The protein belongs to the ClpX chaperone family. HslU subfamily. As to quaternary structure, a double ring-shaped homohexamer of HslV is capped on each side by a ring-shaped HslU homohexamer. The assembly of the HslU/HslV complex is dependent on binding of ATP.

The protein localises to the cytoplasm. Its function is as follows. ATPase subunit of a proteasome-like degradation complex; this subunit has chaperone activity. The binding of ATP and its subsequent hydrolysis by HslU are essential for unfolding of protein substrates subsequently hydrolyzed by HslV. HslU recognizes the N-terminal part of its protein substrates and unfolds these before they are guided to HslV for hydrolysis. This chain is ATP-dependent protease ATPase subunit HslU, found in Lactiplantibacillus plantarum (strain ATCC BAA-793 / NCIMB 8826 / WCFS1) (Lactobacillus plantarum).